The sequence spans 286 residues: MKNANVALLQLCSGENTRDNLAQIEQQIKQLNSGIQLVMTPENALLFANAASYRHHAEQHNDGPLQQEVREMARRYGVWIQVGSMPMISRESPDLITTSSLLFDSQGELKARYDKIHMFDVDIKDIHGRYRESDTYQPGEHLTVADTPVGRLGMTVCYDLRFPGLFQALRAQGAEIISVPAAFTKVTGEAHWEILLRARAIENQCVILAAAQVGRHGATRRTWGHTMAVDAWGKIIGQNPDAVSALKVKIETTGLKTIRNQMPVLQHNRFVSSLVPRLSDSKQSSK.

Residues 4 to 252 form the CN hydrolase domain; the sequence is ANVALLQLCS…VSALKVKIET (249 aa). Catalysis depends on Glu42, which acts as the Proton acceptor. Lys115 is an active-site residue. Cys157 (nucleophile) is an active-site residue.

It belongs to the carbon-nitrogen hydrolase superfamily. NIT1/NIT2 family.

It carries out the reaction N-(4-oxoglutaryl)-L-cysteinylglycine + H2O = L-cysteinylglycine + 2-oxoglutarate. Hydrolyzes deaminated glutathione (dGSH, 2-oxoglutaramate) to alpha-ketoglutarate (alpha-KG) and cysteinylglycine (specific activity 6.50 umol/min/mg), has less activity against alpha-ketoglutaramate (a-KGM, specific activity 0.20 umol/min/mg), very little activity on glutathione and none on L-glutamine. May function as a metabolite repair enzyme. This is Deaminated glutathione amidase from Yersinia enterocolitica.